A 440-amino-acid chain; its full sequence is Chromosome partition protein MukF (440 aa).

The leucine-zipper stretch occupies residues Leu-208 to Ile-236.

Belongs to the MukF family. Interacts, and probably forms a ternary complex, with MukE and MukB via its C-terminal region. The complex formation is stimulated by calcium or magnesium. It is required for an interaction between MukE and MukB.

The protein resides in the cytoplasm. It is found in the nucleoid. Its function is as follows. Involved in chromosome condensation, segregation and cell cycle progression. May participate in facilitating chromosome segregation by condensation DNA from both sides of a centrally located replisome during cell division. Not required for mini-F plasmid partitioning. Probably acts via its interaction with MukB and MukE. Overexpression results in anucleate cells. It has a calcium binding activity. This Escherichia coli O127:H6 (strain E2348/69 / EPEC) protein is Chromosome partition protein MukF.